A 232-amino-acid chain; its full sequence is Large ribosomal subunit protein uL1 (232 aa).

Belongs to the universal ribosomal protein uL1 family. In terms of assembly, part of the 50S ribosomal subunit.

Functionally, binds directly to 23S rRNA. The L1 stalk is quite mobile in the ribosome, and is involved in E site tRNA release. In terms of biological role, protein L1 is also a translational repressor protein, it controls the translation of the L11 operon by binding to its mRNA. This is Large ribosomal subunit protein uL1 from Methylobacterium radiotolerans (strain ATCC 27329 / DSM 1819 / JCM 2831 / NBRC 15690 / NCIMB 10815 / 0-1).